Here is a 372-residue protein sequence, read N- to C-terminus: Biotin synthase (372 aa).

The Radical SAM core domain maps to 73–308 (CCGNTVDLCS…QQIIRYAGGR (236 aa)). Positions 91, 95, and 98 each coordinate [4Fe-4S] cluster. [2Fe-2S] cluster-binding residues include C136, C173, C233, and R303.

Belongs to the radical SAM superfamily. Biotin synthase family. As to quaternary structure, homodimer. [4Fe-4S] cluster serves as cofactor. [2Fe-2S] cluster is required as a cofactor.

It catalyses the reaction (4R,5S)-dethiobiotin + (sulfur carrier)-SH + 2 reduced [2Fe-2S]-[ferredoxin] + 2 S-adenosyl-L-methionine = (sulfur carrier)-H + biotin + 2 5'-deoxyadenosine + 2 L-methionine + 2 oxidized [2Fe-2S]-[ferredoxin]. Its pathway is cofactor biosynthesis; biotin biosynthesis; biotin from 7,8-diaminononanoate: step 2/2. In terms of biological role, catalyzes the conversion of dethiobiotin (DTB) to biotin by the insertion of a sulfur atom into dethiobiotin via a radical-based mechanism. The protein is Biotin synthase of Cyanothece sp. (strain PCC 7425 / ATCC 29141).